The sequence spans 2300 residues: Protein hobbit (2300 aa).

The signal sequence occupies residues 1–21 (MMLQLLLFCLALFIFVYWVLP). The tract at residues 23–117 (GISWYLVKRF…LRRTQTLAGK (95 aa)) is transmembrane domain. 2 disordered regions span residues 269-290 (TSTG…RSYD) and 2111-2148 (VSDE…GKKG). A compositionally biased stretch (polar residues) spans 270–282 (STGQPSRRSTQGL). A required for endoplasmic reticulum-cell membrane contact sites location and binding to phosphatidylinositols region spans residues 1750–2300 (VVSETVGAFL…ASSGKRSGND (551 aa)). Residues 2119–2140 (ASTSSASTTNLQAKSSTSSSTK) show a composition bias toward low complexity.

The protein localises to the cell membrane. It localises to the endoplasmic reticulum membrane. It is found in the mitochondrion membrane. In terms of biological role, tube-forming lipid transport protein which binds to phosphatidylinositols and affects phosphatidylinositol-4,5-bisphosphate (PtdIns-4,5-P2) distribution. This is Protein hobbit from Drosophila melanogaster (Fruit fly).